A 282-amino-acid chain; its full sequence is Probable endonuclease 4 (282 aa).

Zn(2+)-binding residues include His-69, His-109, Glu-145, Asp-179, His-182, His-216, Asp-229, His-231, and Glu-261.

Belongs to the AP endonuclease 2 family. It depends on Zn(2+) as a cofactor.

It carries out the reaction Endonucleolytic cleavage to 5'-phosphooligonucleotide end-products.. Endonuclease IV plays a role in DNA repair. It cleaves phosphodiester bonds at apurinic or apyrimidinic (AP) sites, generating a 3'-hydroxyl group and a 5'-terminal sugar phosphate. This Chlorobium chlorochromatii (strain CaD3) protein is Probable endonuclease 4.